The primary structure comprises 510 residues: Mitogen-activated protein kinase 9 (510 aa).

The region spanning 23 to 314 is the Protein kinase domain; it reads YQIQEVIGKG…AEEALADPYF (292 aa). ATP contacts are provided by residues 29–37 and lysine 52; that span reads IGKGSYGVV. Aspartate 149 acts as the Proton acceptor in catalysis. Threonine 185 is modified (phosphothreonine). The TXY motif lies at 185–187; sequence TDY. At tyrosine 187 the chain carries Phosphotyrosine. At threonine 190 the chain carries Phosphothreonine. A disordered region spans residues 393–461; the sequence is NYGKGEKGSP…SDYRNGTSQT (69 aa). Basic and acidic residues predominate over residues 410 to 431; sequence LPRERVPAPKKENGSHNHDIEN. Residues 433–461 show a composition bias toward polar residues; that stretch reads SIASLVTTLESPPTSQHEGSDYRNGTSQT.

The protein belongs to the protein kinase superfamily. CMGC Ser/Thr protein kinase family. MAP kinase subfamily. Post-translationally, dually phosphorylated on Thr-185 and Tyr-187, which activates the enzyme.

The enzyme catalyses L-seryl-[protein] + ATP = O-phospho-L-seryl-[protein] + ADP + H(+). It carries out the reaction L-threonyl-[protein] + ATP = O-phospho-L-threonyl-[protein] + ADP + H(+). Its activity is regulated as follows. Activated by threonine and tyrosine phosphorylation. This Arabidopsis thaliana (Mouse-ear cress) protein is Mitogen-activated protein kinase 9 (MPK9).